A 183-amino-acid polypeptide reads, in one-letter code: Potassium-transporting ATPase KdpC subunit (183 aa).

A helical transmembrane segment spans residues 10 to 30 (ASLLVLSLVTGVAYPLLVTGI).

It belongs to the KdpC family. The system is composed of three essential subunits: KdpA, KdpB and KdpC.

It localises to the cell inner membrane. Its function is as follows. Part of the high-affinity ATP-driven potassium transport (or Kdp) system, which catalyzes the hydrolysis of ATP coupled with the electrogenic transport of potassium into the cytoplasm. This subunit acts as a catalytic chaperone that increases the ATP-binding affinity of the ATP-hydrolyzing subunit KdpB by the formation of a transient KdpB/KdpC/ATP ternary complex. This is Potassium-transporting ATPase KdpC subunit from Pseudomonas aeruginosa (strain ATCC 15692 / DSM 22644 / CIP 104116 / JCM 14847 / LMG 12228 / 1C / PRS 101 / PAO1).